The primary structure comprises 598 residues: Elongation factor 4 (598 aa).

The tr-type G domain maps to 2–184 (NNIRNFAIIA…AIVTKLPAPQ (183 aa)). GTP-binding positions include 14-19 (DHGKST) and 131-134 (NKVD).

This sequence belongs to the TRAFAC class translation factor GTPase superfamily. Classic translation factor GTPase family. LepA subfamily.

It is found in the cell membrane. It catalyses the reaction GTP + H2O = GDP + phosphate + H(+). Functionally, required for accurate and efficient protein synthesis under certain stress conditions. May act as a fidelity factor of the translation reaction, by catalyzing a one-codon backward translocation of tRNAs on improperly translocated ribosomes. Back-translocation proceeds from a post-translocation (POST) complex to a pre-translocation (PRE) complex, thus giving elongation factor G a second chance to translocate the tRNAs correctly. Binds to ribosomes in a GTP-dependent manner. The protein is Elongation factor 4 of Wolbachia pipientis subsp. Culex pipiens (strain wPip).